Here is an 82-residue protein sequence, read N- to C-terminus: Putative membrane protein insertion efficiency factor (82 aa).

Belongs to the UPF0161 family.

Its subcellular location is the cell inner membrane. Its function is as follows. Could be involved in insertion of integral membrane proteins into the membrane. The protein is Putative membrane protein insertion efficiency factor of Thermus thermophilus (strain ATCC BAA-163 / DSM 7039 / HB27).